We begin with the raw amino-acid sequence, 369 residues long: Ferredoxin--NADP reductase 2 (369 aa).

Residues 1 to 23 (MDLSIPNPVADTTKQVDGGSPAG) form a disordered region. Positions 58, 66, 71, 111, 146, 311, and 352 each coordinate FAD.

This sequence belongs to the ferredoxin--NADP reductase type 2 family. As to quaternary structure, homodimer. Requires FAD as cofactor.

The enzyme catalyses 2 reduced [2Fe-2S]-[ferredoxin] + NADP(+) + H(+) = 2 oxidized [2Fe-2S]-[ferredoxin] + NADPH. This chain is Ferredoxin--NADP reductase 2, found in Cupriavidus necator (strain ATCC 17699 / DSM 428 / KCTC 22496 / NCIMB 10442 / H16 / Stanier 337) (Ralstonia eutropha).